We begin with the raw amino-acid sequence, 236 residues long: Uridylate kinase (236 aa).

12–15 contributes to the ATP binding site; it reads KISG. Residues 20–25 form an involved in allosteric activation by GTP region; that stretch reads GTNGYG. Residue glycine 54 participates in UMP binding. ATP contacts are provided by glycine 55 and arginine 59. Residues aspartate 72 and 133-140 each bind UMP; that span reads TGNPYFST. Residues tyrosine 166 and aspartate 169 each contribute to the ATP site.

This sequence belongs to the UMP kinase family. As to quaternary structure, homohexamer.

It is found in the cytoplasm. The catalysed reaction is UMP + ATP = UDP + ADP. It functions in the pathway pyrimidine metabolism; CTP biosynthesis via de novo pathway; UDP from UMP (UMPK route): step 1/1. Its activity is regulated as follows. Allosterically activated by GTP. Inhibited by UTP. In terms of biological role, catalyzes the reversible phosphorylation of UMP to UDP. This is Uridylate kinase from Clostridium acetobutylicum (strain ATCC 824 / DSM 792 / JCM 1419 / IAM 19013 / LMG 5710 / NBRC 13948 / NRRL B-527 / VKM B-1787 / 2291 / W).